We begin with the raw amino-acid sequence, 532 residues long: ATP-dependent RNA helicase DBP3 (532 aa).

The segment at 1 to 78 (MGKRDRTEDD…EVAEEKPKMT (78 aa)) is disordered. Residues 15 to 58 (KKVKLDKKDKKEKKEKKDKKDKKDKKDKKDKKDKKEKKEKKEKK) show a composition bias toward basic residues. The Q motif motif lies at 126–152 (MEFSHVTLDPRITKVLTKFPRPTPIQA). Residues 155-327 (WPYLLAGKDM…EGFMKTPTKV (173 aa)) form the Helicase ATP-binding domain. 168-175 (AETGSGKT) contacts ATP. The DEAD box signature appears at 274 to 277 (DEAD). A Helicase C-terminal domain is found at 356–502 (RLLDLLRQYA…PVPDELLKFG (147 aa)).

This sequence belongs to the DEAD box helicase family. DDX5/DBP2 subfamily.

The protein localises to the nucleus. It localises to the nucleolus. The enzyme catalyses ATP + H2O = ADP + phosphate + H(+). In terms of biological role, ATP-dependent RNA helicase required for 60S ribosomal subunit synthesis. Involved in efficient pre-rRNA processing, predominantly at site A3, which is necessary for the normal formation of 25S and 5.8S rRNAs. The protein is ATP-dependent RNA helicase DBP3 (DBP3) of Yarrowia lipolytica (strain CLIB 122 / E 150) (Yeast).